A 511-amino-acid chain; its full sequence is ATP synthase subunit alpha (511 aa).

An ATP-binding site is contributed by 169-176; it reads GDRQTGKT.

It belongs to the ATPase alpha/beta chains family. In terms of assembly, F-type ATPases have 2 components, CF(1) - the catalytic core - and CF(0) - the membrane proton channel. CF(1) has five subunits: alpha(3), beta(3), gamma(1), delta(1), epsilon(1). CF(0) has three main subunits: a(1), b(2) and c(9-12). The alpha and beta chains form an alternating ring which encloses part of the gamma chain. CF(1) is attached to CF(0) by a central stalk formed by the gamma and epsilon chains, while a peripheral stalk is formed by the delta and b chains.

The protein localises to the cell inner membrane. The catalysed reaction is ATP + H2O + 4 H(+)(in) = ADP + phosphate + 5 H(+)(out). Functionally, produces ATP from ADP in the presence of a proton gradient across the membrane. The alpha chain is a regulatory subunit. The protein is ATP synthase subunit alpha of Bartonella tribocorum (strain CIP 105476 / IBS 506).